A 270-amino-acid polypeptide reads, in one-letter code: tRNA pseudouridine synthase A (270 aa).

Residue Asp-60 is the Nucleophile of the active site. The interval 107-111 is RNA binding; it reads FHARF. Tyr-118 serves as a coordination point for substrate. Residues 168 to 172 form an interaction with tRNA region; sequence QCQSR.

This sequence belongs to the tRNA pseudouridine synthase TruA family. Homodimer.

It catalyses the reaction uridine(38/39/40) in tRNA = pseudouridine(38/39/40) in tRNA. In terms of biological role, formation of pseudouridine at positions 38, 39 and 40 in the anticodon stem and loop of transfer RNAs. The sequence is that of tRNA pseudouridine synthase A from Klebsiella pneumoniae subsp. pneumoniae (strain ATCC 700721 / MGH 78578).